The primary structure comprises 1603 residues: GATOR1 complex protein DEPDC5 (1603 aa).

Disordered stretches follow at residues glycine 427 to glutamate 450, valine 484 to glycine 527, and leucine 696 to serine 720. Over residues proline 430–arginine 439 the composition is skewed to basic and acidic residues. The segment covering serine 494–serine 508 has biased composition (low complexity). Serine 505 bears the Phosphoserine mark. Composition is skewed to polar residues over residues serine 518 to glycine 527 and leucine 696 to threonine 707. Serine 1002 is subject to Phosphoserine; by PIM1. The segment covering aspartate 1135–tyrosine 1153 has biased composition (polar residues). The interval aspartate 1135–glutamine 1165 is disordered. Residues serine 1154–glutamine 1165 are compositionally biased toward low complexity. The DEP domain occupies proline 1187–threonine 1262. Position 1530 is a phosphoserine; by PKB/AKT1 and PIM1 (serine 1530).

The protein belongs to the IML1 family. Within the GATOR complex, component of the GATOR1 subcomplex, made of DEPDC5, NPRL2 and NPRL3. GATOR1 mediates the strong interaction of the GATOR complex with small GTPases Rag (RagA/RRAGA, RagB/RRAGB, RagC/RRAGC and/or RagD/RRAGD) heterodimers. Interacts with SAMTOR; interaction is direct and takes place in presence of methionine, leading to inhibit the activity of the GATOR1 complex. Post-translationally, phosphorylation at Ser-1002 and Ser-1530 by AKT1 and PIM1 inhibit the activity of DEPDC5, releasing inhibition of the mTORC1 pathway. In terms of processing, ubiquitinated. Amino acid-induced 'Lys-48'-linked polyubiquitination of DEPDC5 by the BCR(KLHL22) ubiquitin ligase complex leads to DEPDC5 proteasomal degradation and inhibition of the GATOR1 complex. Ubiquitination may occur at multiple lysines. As to expression, expressed in developing and adult brain.

It is found in the lysosome membrane. Its subcellular location is the cytoplasm. The protein resides in the cytosol. The protein localises to the perinuclear region. Functionally, as a component of the GATOR1 complex functions as an inhibitor of the amino acid-sensing branch of the mTORC1 pathway. In response to amino acid depletion, the GATOR1 complex has GTPase activating protein (GAP) activity and strongly increases GTP hydrolysis by RagA/RRAGA (or RagB/RRAGB) within heterodimeric Rag complexes, thereby turning them into their inactive GDP-bound form, releasing mTORC1 from lysosomal surface and inhibiting mTORC1 signaling. In the presence of abundant amino acids, the GATOR1 complex is negatively regulated by GATOR2, the other GATOR subcomplex, in this amino acid-sensing branch of the TORC1 pathway. Within the GATOR1 complex, DEPDC5 mediates direct interaction with the nucleotide-binding pocket of small GTPases Rag (RagA/RRAGA, RagB/RRAGB, RagC/RRAGC and/or RagD/RRAGD) and coordinates their nucleotide loading states by promoting RagA/RRAGA or RagB/RRAGB into their GDP-binding state and RagC/RRAGC or RagD/RRAGD into their GTP-binding state. However, it does not execute the GAP activity, which is mediated by NPRL2. This chain is GATOR1 complex protein DEPDC5, found in Homo sapiens (Human).